Reading from the N-terminus, the 327-residue chain is Fructose-1,6-bisphosphatase class 1 (327 aa).

Residues glutamate 84, aspartate 103, leucine 105, and aspartate 106 each contribute to the Mg(2+) site. Substrate is bound by residues 106–109 (DGSS), asparagine 197, and lysine 263. Glutamate 269 contributes to the Mg(2+) binding site.

It belongs to the FBPase class 1 family. Homotetramer. Requires Mg(2+) as cofactor.

It localises to the cytoplasm. It catalyses the reaction beta-D-fructose 1,6-bisphosphate + H2O = beta-D-fructose 6-phosphate + phosphate. It participates in carbohydrate biosynthesis; gluconeogenesis. In Idiomarina loihiensis (strain ATCC BAA-735 / DSM 15497 / L2-TR), this protein is Fructose-1,6-bisphosphatase class 1.